The primary structure comprises 650 residues: SPARC-like protein 1 (650 aa).

The first 16 residues, 1–16 (MKAVLLLLCALGTAVA), serve as a signal peptide directing secretion. The segment at 51–352 (TADIENHPSD…HGAGDDYFIP (302 aa)) is disordered. Residues 54–64 (IENHPSDKAEK) show a composition bias toward basic and acidic residues. Phosphoserine occurs at positions 70, 78, and 86. Residues 75–85 (HEQSTEQDKTY) show a composition bias toward basic and acidic residues. Residues 91–101 (LKDEEDGDGDL) are compositionally biased toward acidic residues. Polar residues-rich tracts occupy residues 116–126 (EGTSEPQQKSL) and 135–148 (TVST…QRAN). N148 is a glycosylation site (N-linked (GlcNAc...) asparagine). A phosphoserine mark is found at S155 and S163. Polar residues predominate over residues 157–174 (EQPVSDSHQQPNESSKQT). N-linked (GlcNAc...) asparagine glycosylation occurs at N168. Over residues 189-210 (IPNEEEEEEEDEEEEEEEEPED) the composition is skewed to acidic residues. S272 is subject to Phosphoserine. A compositionally biased stretch (basic and acidic residues) spans 277–299 (EDKAAGSKEHIPHTEQQDQEGKA). S353 carries the phosphoserine modification. Positions 375-415 (EETTTGESENRREAADNQEAKKAESSPNAEPSDEGNSREHS) are disordered. Positions 382-398 (SENRREAADNQEAKKAE) are enriched in basic and acidic residues. The residue at position 406 (S406) is a Phosphoserine. The region spanning 418 to 440 (SCTNFQCKRGHICKTDPQGKPHC) is the Follistatin-like domain. Intrachain disulfides connect C419–C430, C424–C440, C442–C476, C448–C469, C458–C495, C501–C612, and C620–C636. The Kazal-like domain occupies 436–497 (GKPHCVCQDP…QLDYFGACKS (62 aa)). N462 carries N-linked (GlcNAc...) asparagine glycosylation. The EF-hand domain occupies 608–643 (PMEHCITRFFEECDPNKDKHITLKEWGHCFGIKEED). D621, N623, D625, H627, and E632 together coordinate Ca(2+).

Belongs to the SPARC family. In terms of tissue distribution, highest expression in brain. Moderate levels in heart, adrenal gland, epididymis and lung. Low levels in kidney, eye, liver, spleen, submandibular gland and testis.

The protein localises to the secreted. Its subcellular location is the extracellular space. The protein resides in the extracellular matrix. This Mus musculus (Mouse) protein is SPARC-like protein 1 (Sparcl1).